The sequence spans 56 residues: Large ribosomal subunit protein bL33 (56 aa).

This sequence belongs to the bacterial ribosomal protein bL33 family.

The chain is Large ribosomal subunit protein bL33 from Vibrio campbellii (strain ATCC BAA-1116).